A 449-amino-acid polypeptide reads, in one-letter code: L10-interacting MYB domain-containing protein (449 aa).

Positions 162-225 (SNPQTKGYWS…YTRPQLKNHW (64 aa)) constitute a Myb-like domain. The segment at 297 to 324 (TYTPPSRSRKKLLHNRSESPQWRDTTPL) is disordered. A compositionally biased stretch (polar residues) spans 314–324 (ESPQWRDTTPL).

In terms of assembly, interacts with RPL10A. Expressed in seedlings, leaves, roots, stems and flowers.

It localises to the nucleus. Its function is as follows. Transcriptional repressor that associates with ribosomal protein promoters. In Arabidopsis thaliana (Mouse-ear cress), this protein is L10-interacting MYB domain-containing protein.